A 141-amino-acid polypeptide reads, in one-letter code: Large ribosomal subunit protein uL11 (141 aa).

Belongs to the universal ribosomal protein uL11 family. Part of the ribosomal stalk of the 50S ribosomal subunit. Interacts with L10 and the large rRNA to form the base of the stalk. L10 forms an elongated spine to which L12 dimers bind in a sequential fashion forming a multimeric L10(L12)X complex. Post-translationally, one or more lysine residues are methylated.

Forms part of the ribosomal stalk which helps the ribosome interact with GTP-bound translation factors. The sequence is that of Large ribosomal subunit protein uL11 from Lactiplantibacillus plantarum (strain ATCC BAA-793 / NCIMB 8826 / WCFS1) (Lactobacillus plantarum).